Here is a 94-residue protein sequence, read N- to C-terminus: Co-chaperonin GroES (94 aa).

It belongs to the GroES chaperonin family. In terms of assembly, heptamer of 7 subunits arranged in a ring. Interacts with the chaperonin GroEL.

It localises to the cytoplasm. Together with the chaperonin GroEL, plays an essential role in assisting protein folding. The GroEL-GroES system forms a nano-cage that allows encapsulation of the non-native substrate proteins and provides a physical environment optimized to promote and accelerate protein folding. GroES binds to the apical surface of the GroEL ring, thereby capping the opening of the GroEL channel. The sequence is that of Co-chaperonin GroES from Staphylococcus carnosus (strain TM300).